The primary structure comprises 376 residues: Ribonucleoside-diphosphate reductase subunit beta (376 aa).

Fe cation-binding residues include Asp85, Glu116, and His119. Tyr123 is a catalytic residue. The Fe cation site is built by Glu205, Glu239, and His242.

Belongs to the ribonucleoside diphosphate reductase small chain family. In terms of assembly, tetramer of two alpha and two beta subunits. It depends on Fe cation as a cofactor.

It carries out the reaction a 2'-deoxyribonucleoside 5'-diphosphate + [thioredoxin]-disulfide + H2O = a ribonucleoside 5'-diphosphate + [thioredoxin]-dithiol. Its function is as follows. Provides the precursors necessary for DNA synthesis. Catalyzes the biosynthesis of deoxyribonucleotides from the corresponding ribonucleotides. The polypeptide is Ribonucleoside-diphosphate reductase subunit beta (nrdB) (Haemophilus influenzae (strain ATCC 51907 / DSM 11121 / KW20 / Rd)).